The following is a 202-amino-acid chain: Ribonuclease HII (202 aa).

The RNase H type-2 domain maps to 18 to 202 (TYICGVDEAG…FAPVAKLLKQ (185 aa)). A divalent metal cation-binding residues include Asp24, Glu25, and Asp116.

It belongs to the RNase HII family. Mn(2+) serves as cofactor. It depends on Mg(2+) as a cofactor.

It is found in the cytoplasm. The catalysed reaction is Endonucleolytic cleavage to 5'-phosphomonoester.. Functionally, endonuclease that specifically degrades the RNA of RNA-DNA hybrids. The sequence is that of Ribonuclease HII from Acholeplasma laidlawii (strain PG-8A).